The primary structure comprises 1231 residues: MAALGLLLQAAAACGSAGPLRLGRCYRGARGLCTRLAEPDGLEGARQEDEEEQPPPPGAEEQSTAMVKDSRDLLKEFPQPKNLLNSVIGRALGISHARDKLVYIHTNGPRKKKVTLHIKWPKNVEVEGYGTKKIDAERQAAAAACQLFKGWGLLGPRNELFDAAKYRLLADQLGCPDERWCSEGKWRSKSGPSLADLSTCWRRMEPDDPIQPMEQGRMPKAMRREELEEGELEEGELEEGELEEEAIDVSDYLPMAHQDARTPGRDASRGGSSIEMTDDNTAIRALTQFPLPKNLLAQVIQIATSSSTVKEYMQFRTVGTKTKICKLTLRWPCPMTFAAKGRRKVEAENKAAALACQKLKSLGLVDKNNNPLSHAMYNMTSLRELGENQRKPCHIKVPEATLRKIENYLNHYPVDIRESRPRIADDMMNLSKESGAISDAITGKTYIPMLEAEEVRLSQNLLALWKRRGSSWQESHPLPVDPHKDTILSAIEQNPVVVIAGDTGCGKTTRIPQLLLEHYILEGRGARCNVVITQPRRISAISVAQRVAQELGPNMRKNVGYQVRLESKPPARGGALLFCTVGILLRKLQGNPSLEGVSHVVVDEVHERDVNTDFLLILLKGIQKLNPDLRLVLMSATGDNQRFSHYFGGCPVVKVPGFMYPVKEYYLEEILAKLGRHRHRHYEIKQSDDECVLDLDLITDLVLQIDAHGEPGGILCFLPGWQEIKGVQQRLLEMLGSQNSRYLVLPVHSNIPMMDQQNIFQRPPPGVRKIVLATNIAETSITINDIVHVVDSGTHKEERYDLKTKVSCLETVWVSKSNVVQRRGRAGRCQSGFAYHLFPRSRLDKMPTYQVPEILRTPLENLVVQAKIHMPEKTAVEFLSKALDSPDIKAVDEAVILLQEIGVLDQREALTTLGKRLAQISTDPRLAKAIVLASIYRCLHPLLVIVSCLTRDPFSSSLQNRAEVDKAKAVLSRESGSDHLAFVRAVAGWEEVLRRRDSRARDNYLQDYYLYGPSLRFINGLVKQFSENLYEAFLVSSPSDCTMPSSVCNQYSEEEELVKGVLMAGLYPNLIQVRQGKVTRQGKFKPNSYAYRTKAGTVLLHKSTINREASKLYSRWLTYFMAVKSNGGVFVRDSSQVHPLAVLLMTDTDIHVRDDGWRATVSLTDSDLLVLEGDSYTIRLLRDFRVSLSKMVETCLCYEMAAIPGDLHHQHSQLLDILVDLLKGPPGSFGA.

Residues 39–65 (PDGLEGARQEDEEEQPPPPGAEEQSTA) form a disordered region. 2 DRBM domains span residues 80-148 (PKNL…CQLF) and 292-359 (PKNL…CQKL). The 169-residue stretch at 488–656 (LSAIEQNPVV…FGGCPVVKVP (169 aa)) folds into the Helicase ATP-binding domain. An ATP-binding site is contributed by 501–508 (GDTGCGKT). Residues 603 to 606 (DEVH) carry the DEAH box motif. Residues 697 to 870 (LITDLVLQID…NLVVQAKIHM (174 aa)) form the Helicase C-terminal domain.

This sequence belongs to the DEAD box helicase family. DEAH subfamily.

The protein localises to the cytoplasm. It is found in the mitochondrion. It localises to the mitochondrion matrix. Its subcellular location is the mitochondrion nucleoid. The catalysed reaction is ATP + H2O = ADP + phosphate + H(+). Functionally, RNA-dependent helicase. Plays an important role in the assembly of the mitochondrial large ribosomal subunit. Required for optimal function of the zinc-finger antiviral protein ZC3HAV1. Associates with mitochondrial DNA. Involved in nervous system development and differentiation through its involvement in the up-regulation of a number of genes which are required for neurogenesis, including GSC, NCAM1, neurogenin, and NEUROD. This chain is ATP-dependent RNA helicase DHX30 (DHX30), found in Gallus gallus (Chicken).